We begin with the raw amino-acid sequence, 304 residues long: Probable WRKY transcription factor 13 (304 aa).

Positions 141–190 (QKNNHGSEIDVDDNDDEVGDGGGINDDDNGRHHHHDTPSRHDKHNTASLG) are disordered. Positions 149–159 (IDVDDNDDEVG) are enriched in acidic residues. Residues 217–282 (SEVDVLDDGY…YEGRHLHSPS (66 aa)) constitute a DNA-binding region (WRKY).

This sequence belongs to the WRKY group II-c family.

It localises to the nucleus. Transcription factor. Interacts specifically with the W box (5'-(T)TGAC[CT]-3'), a frequently occurring elicitor-responsive cis-acting element. The chain is Probable WRKY transcription factor 13 (WRKY13) from Arabidopsis thaliana (Mouse-ear cress).